A 148-amino-acid chain; its full sequence is Hemoglobin subunit gamma (148 aa).

In terms of domain architecture, Globin spans 3-148; the sequence is HFTAEEKAII…VAIAMGHKYH (146 aa). The heme b site is built by His-64 and His-93.

It belongs to the globin family. Heterotetramer of two alpha chains and two gamma chains in fetal hemoglobin (Hb F). As to expression, red blood cells.

In terms of biological role, gamma chains make up the fetal hemoglobin F, in combination with alpha chains. The protein is Hemoglobin subunit gamma (HBG) of Carlito syrichta (Philippine tarsier).